Consider the following 384-residue polypeptide: Spermidine/putrescine import ATP-binding protein PotA (384 aa).

In terms of domain architecture, ABC transporter spans 6–238 (ITFNNVSKTF…PINHFVANFI (233 aa)). 40–47 (GASGSGKS) is a binding site for ATP.

Belongs to the ABC transporter superfamily. Spermidine/putrescine importer (TC 3.A.1.11.1) family. As to quaternary structure, the complex is composed of two ATP-binding proteins (PotA), two transmembrane proteins (PotB and PotC) and a solute-binding protein (PotD).

It localises to the cell membrane. It catalyses the reaction ATP + H2O + polyamine-[polyamine-binding protein]Side 1 = ADP + phosphate + polyamineSide 2 + [polyamine-binding protein]Side 1.. Its function is as follows. Part of the ABC transporter complex PotABCD involved in spermidine/putrescine import. Responsible for energy coupling to the transport system. This Streptococcus pyogenes serotype M12 (strain MGAS2096) protein is Spermidine/putrescine import ATP-binding protein PotA.